The following is a 278-amino-acid chain: Juvenile hormone acid O-methyltransferase (278 aa).

It belongs to the methyltransferase superfamily. As to expression, specifically expressed in the corpora allata (CA).

It carries out the reaction (2E,6E)-farnesoate + S-adenosyl-L-methionine = methyl (2E,6E)-farnesoate + S-adenosyl-L-homocysteine. The catalysed reaction is juvenile hormone III carboxylate + S-adenosyl-L-methionine = juvenile hormone III + S-adenosyl-L-homocysteine. Its function is as follows. O-methyltransferase that transfers a methyl group from S-adenosyl-L-methionine (SAM) to the carboxyl group of juvenile hormone acids to produce active juvenile hormones in the corpora allata, the last step during juvenile hormone biosynthesis. Also able to methylate farnesoate to methyl farnesoate. The protein is Juvenile hormone acid O-methyltransferase of Bombyx mori (Silk moth).